The sequence spans 629 residues: Ribosomal protein S6 kinase 2 beta (629 aa).

The 260-residue stretch at 62–321 (FVLLKVLGQG…AEELKRHPFF (260 aa)) folds into the Protein kinase 1 domain. Residues 68-76 (LGQGSFGKV) and lysine 94 contribute to the ATP site. The Proton acceptor role is filled by aspartate 187. A Phosphoserine modification is found at serine 221. Residues 322-391 (STIDWNKLYR…VAPVLVEEDA (70 aa)) form the AGC-kinase C-terminal domain. Threonine 359 bears the Phosphothreonine mark. Serine 363 carries the post-translational modification Phosphoserine. Serine 380 is subject to Phosphoserine; by autocatalysis. The region spanning 416 to 629 (YTVRETIGVG…PEEILARIGS (214 aa)) is the Protein kinase 2 domain. Residues 422–430 (IGVGSYSVC) and lysine 445 contribute to the ATP site. Catalysis depends on aspartate 533, which acts as the Proton acceptor. Threonine 571 is subject to Phosphothreonine.

Belongs to the protein kinase superfamily. AGC Ser/Thr protein kinase family. S6 kinase subfamily. Mg(2+) is required as a cofactor. Autophosphorylated on Ser-380, as part of the activation process.

It catalyses the reaction L-seryl-[protein] + ATP = O-phospho-L-seryl-[protein] + ADP + H(+). The catalysed reaction is L-threonyl-[protein] + ATP = O-phospho-L-threonyl-[protein] + ADP + H(+). Activated by multiple phosphorylations on threonine and serine residues. Its function is as follows. Serine/threonine kinase that may play a role in mediating the growth-factor and stress induced activation of transcription. The chain is Ribosomal protein S6 kinase 2 beta from Xenopus laevis (African clawed frog).